The chain runs to 185 residues: Ribosome-recycling factor (185 aa).

It belongs to the RRF family.

It localises to the cytoplasm. In terms of biological role, responsible for the release of ribosomes from messenger RNA at the termination of protein biosynthesis. May increase the efficiency of translation by recycling ribosomes from one round of translation to another. The chain is Ribosome-recycling factor from Streptococcus sanguinis (strain SK36).